The primary structure comprises 78 residues: MARVCQITGKRPVTGNNVSHAHNKTRRRFLPNLHSHRFWVESENRWVRLRISSKGLRIIDKKGIDAVLADLRARGEKV.

Belongs to the bacterial ribosomal protein bL28 family.

The polypeptide is Large ribosomal subunit protein bL28 (Thioalkalivibrio sulfidiphilus (strain HL-EbGR7)).